We begin with the raw amino-acid sequence, 211 residues long: Large ribosomal subunit protein uL4 (211 aa).

Residues 44 to 90 are disordered; it reads ERQGTHSTLTKGEVRGGGKKPWRQKHTGKARTGSTRNPHWTGGGVVF. Positions 60-72 are enriched in basic residues; the sequence is GGKKPWRQKHTGK.

The protein belongs to the universal ribosomal protein uL4 family. Part of the 50S ribosomal subunit.

Its function is as follows. One of the primary rRNA binding proteins, this protein initially binds near the 5'-end of the 23S rRNA. It is important during the early stages of 50S assembly. It makes multiple contacts with different domains of the 23S rRNA in the assembled 50S subunit and ribosome. Forms part of the polypeptide exit tunnel. This Ureaplasma parvum serovar 3 (strain ATCC 27815 / 27 / NCTC 11736) protein is Large ribosomal subunit protein uL4.